The primary structure comprises 473 residues: MSLRPGRAHPLAASPLHTPLPARPRPQLRLSTSTSCAAMKSYRLSELSDAEVGGLKARPRIDFSSIFGTVNPIVEDVRMRGDAAVKDYTVKFDKVALDDVVVRVSDLPDVELDPAVKEAFDVAYDNIYAFHVSQKLPEKTVENMKGVRCKRITRCIGSVGLYVPGGTAVLPSTALMLAVPAQIAGCKTVVLATPPSRDGSICKEVLYCAKKAGVTHVLKAGGAQAISAMAWGTVSCPKVEKIFGPGNQYVTAAKMILQNSEAMVSIDMPAGPSEVLVIADKYANPVHVAADLLSQAEHGPDSQVVLVVAGDGVDLGAIEAEVSKQCSALPRGEFASKALGHSFTVFAKDMVEAISFSNMYAPEHLIINVKDAEQWEDLVENAGSVFLGQWTPESVGDYASGTNHVLPTYGYARMYSGVSLNSFLKYITVQSLSEEGLRSLGPHVAKMAEVEGLEAHRRAVTLRLQDIEATVTV.

A disordered region spans residues 1–28 (MSLRPGRAHPLAASPLHTPLPARPRPQL). Residues Y162, Q224, and N247 each coordinate NAD(+). 3 residues coordinate substrate: S273, Q295, and H298. Positions 295 and 298 each coordinate Zn(2+). Residues E363 and H364 each act as proton acceptor in the active site. Positions 364, 397, 451, and 456 each coordinate substrate. D397 lines the Zn(2+) pocket. Residue H456 coordinates Zn(2+).

Belongs to the histidinol dehydrogenase family. Requires Zn(2+) as cofactor.

The protein localises to the plastid. Its subcellular location is the chloroplast. The enzyme catalyses L-histidinol + 2 NAD(+) + H2O = L-histidine + 2 NADH + 3 H(+). The protein operates within amino-acid biosynthesis; L-histidine biosynthesis; L-histidine from 5-phospho-alpha-D-ribose 1-diphosphate: step 9/9. Its function is as follows. Catalyzes the sequential NAD-dependent oxidations of L-histidinol to L-histidinaldehyde and then to L-histidine. The chain is Histidinol dehydrogenase, chloroplastic (HDH) from Oryza sativa subsp. japonica (Rice).